Here is a 182-residue protein sequence, read N- to C-terminus: Meiotic recombination protein REC104 (182 aa).

Interacts with REC114 and SPO11.

Potential transcriptional regulator that is required to activate expression of a number of early meiotic genes including HOP1. This is Meiotic recombination protein REC104 (REC104) from Saccharomyces cerevisiae (strain ATCC 204508 / S288c) (Baker's yeast).